The chain runs to 352 residues: C-C chemokine receptor type 5 (352 aa).

The Extracellular segment spans residues 1 to 30 (MDYQVSSPTYDIDYYTSEPCQKVNVKQIAA). Residue Tyr3 is modified to Sulfotyrosine. Ser6 and Ser7 each carry an O-linked (GalNAc...) serine glycan. A sulfotyrosine mark is found at Tyr10, Tyr14, and Tyr15. 2 disulfides stabilise this stretch: Cys20–Cys269 and Cys101–Cys178. The helical transmembrane segment at 31-58 (RLLPPLYSLVFIFGFVGNILVVLILINC) threads the bilayer. Topologically, residues 59–68 (KRLKSMTDIY) are cytoplasmic. A helical membrane pass occupies residues 69–89 (LLNLAISDLFFLLTVPFWAHY). At 90-102 (AAAQWDFGNTMCQ) the chain is on the extracellular side. Residues 103 to 124 (LLTGLYFIGFFSGIFFIILLTI) form a helical membrane-spanning segment. Topologically, residues 125–141 (DRYLAIVHAVFALKART) are cytoplasmic. Residues 142–166 (VTFGVVTSVITWVVAVFASLPGIIF) form a helical membrane-spanning segment. Residues 167-198 (TRSQREGVHYTCSSHFPYSQYQFWKNFQTLKI) are Extracellular-facing. A helical transmembrane segment spans residues 199–218 (VILGLVLPLLVMVICYSGIL). Residues 219 to 235 (KTLLRCRNEKKRHRAVR) are Cytoplasmic-facing. The helical transmembrane segment at 236 to 260 (LIFTIMIVYFLFWAPYNIVLLLNTF) threads the bilayer. The Extracellular portion of the chain corresponds to 261–277 (QEFFGLNNCSSSNRLDQ). The chain crosses the membrane as a helical span at residues 278 to 301 (AMQVTETLGMTHCCINPIIYAFVG). Topologically, residues 302–352 (EKFRNYLLVFFQKHIAKRFCKCCSIFQQEAPERASSVYTRSTGEQETSVGL) are cytoplasmic. S-palmitoyl cysteine attachment occurs at residues Cys321, Cys323, and Cys324. Residues Ser336, Ser337, Ser342, and Ser349 each carry the phosphoserine; by BARK1 modification.

It belongs to the G-protein coupled receptor 1 family. As to quaternary structure, interacts with PRAF2. Efficient ligand binding to CCL3/MIP-1alpha and CCL4/MIP-1beta requires sulfation, O-glycosylation and sialic acid modifications. Glycosylation on Ser-6 is required for efficient binding of CCL4. Interacts with GRK2. Interacts with ARRB1 and ARRB2. Interacts with CNIH4. Interacts with S100A4; this interaction stimulates T-lymphocyte chemotaxis. In terms of processing, sulfated on at least 2 of the N-terminal tyrosines. Sulfation is required for efficient binding of the chemokines, CCL3 and CCL4. Post-translationally, palmitoylation in the C-terminal is important for cell surface expression. Phosphorylation on serine residues in the C-terminal is stimulated by binding CC chemokines especially by APO-RANTES. In terms of processing, O-glycosylated, but not N-glycosylated. Ser-6 appears to be the major site even if Ser-7 may be also O-glycosylated. Also sialylated glycans present which contribute to chemokine binding. Thr-16 and Ser-17 may also be glycosylated and, if so, with small moieties such as a T-antigen.

Its subcellular location is the cell membrane. In terms of biological role, receptor for a number of inflammatory CC-chemokines including CCL3/MIP-1-alpha, CCL4/MIP-1-beta and RANTES and subsequently transduces a signal by increasing the intracellular calcium ion level. May play a role in the control of granulocytic lineage proliferation or differentiation. Participates in T-lymphocyte migration to the infection site by acting as a chemotactic receptor. The sequence is that of C-C chemokine receptor type 5 (CCR5) from Rhinopithecus avunculus (Tonkin snub-nosed monkey).